A 653-amino-acid polypeptide reads, in one-letter code: Fidgetin-like protein 2 (653 aa).

3 disordered regions span residues Met-1–Pro-36, Ala-86–Leu-129, and Tyr-216–Pro-240. Residues Pro-10–Ser-27 are compositionally biased toward polar residues. The span at Glu-97–Pro-107 shows a compositional bias: pro residues. Residues Lys-119–Leu-129 are compositionally biased toward gly residues. Over residues Leu-219–Pro-240 the composition is skewed to pro residues. ATP contacts are provided by residues Ala-395 and Gly-435–Leu-440.

The protein belongs to the AAA ATPase family. Mg(2+) serves as cofactor.

It localises to the cytoplasm. The protein resides in the cell cortex. The enzyme catalyses ATP + H2O = ADP + phosphate + H(+). In terms of biological role, microtubule-severing enzyme that negatively regulates cell migration and wound healing. In migrating cells, targets dynamic microtubules (MTs) at the leading edge and severs them, thereby suppressing motility. Microtubule severing releases ARHGEF2 which activates RHOA, which in turn regulates focal ahesion turnover via focal adhesion kinase, as opposed to F-actin polymerization, to suppress cell motility. Negative regulator of axon regeneration that suppresses axonal growth by selectively severing dynamic MTs in the distal axon shaft and growth cone. Contributes to proper cell branching during endothelial and neuronal development. This chain is Fidgetin-like protein 2, found in Homo sapiens (Human).